We begin with the raw amino-acid sequence, 547 residues long: bZIP transcription factor 29 (547 aa).

3 disordered regions span residues 1–199, 244–312, and 333–356; these read MGDT…SGGE, NSSE…DIAP, and GDES…TNSV. Over residues 15 to 52 the composition is skewed to polar residues; it reads LHSSFGTTSSSIPKNPISQLDLNPNFIRSSAPQFSKPF. Over residues 63 to 73 the composition is skewed to pro residues; sequence PSHPNLIPPTS. Residues 74–89 are compositionally biased toward polar residues; that stretch reads PFSQIPTTRQPGSHNF. The span at 120–132 shows a compositional bias: basic and acidic residues; that stretch reads FRDHDVSMEDRDS. The segment covering 134 to 157 has biased composition (polar residues); the sequence is VFNSNHSLPPSPFTRCNSTSSSSL. Residues 249–263 show a composition bias toward basic and acidic residues; it reads DDSKNGNENRDDMES. A compositionally biased stretch (polar residues) spans 264 to 275; that stretch reads SRASGTKTNGSD. Positions 279–294 are enriched in low complexity; it reads ESSSVNESANNNMNSS. The span at 344 to 356 shows a compositional bias: polar residues; sequence GSMSRKVSPTNSV. A bZIP domain is found at 394-457; that stretch reads DPKRVKRILA…MGLTNQNNEL (64 aa). Residues 396–417 form a basic motif region; that stretch reads KRVKRILANRQSAARSKERKMR. A coiled-coil region spans residues 416 to 469; that stretch reads MRYIVELEHKVQTLQTEATTLSAQLTLLQRDMMGLTNQNNELKFRLQAMEQQAR. Residues 422–457 are leucine-zipper; it reads LEHKVQTLQTEATTLSAQLTLLQRDMMGLTNQNNEL. Residues 517–535 show a composition bias toward low complexity; the sequence is QLRQQPQQMQQQSHQQNHQ. A disordered region spans residues 517 to 547; that stretch reads QLRQQPQQMQQQSHQQNHQNGTMATKSESNE. Positions 536-547 are enriched in polar residues; that stretch reads NGTMATKSESNE.

As to quaternary structure, forms homodimers. In terms of tissue distribution, expressed in roots, leaves and flowers. Expressed in the root tips, lateral root primordia, and guard cells of leaves, hypocotyls and anthers.

It is found in the cytoplasm. Its subcellular location is the nucleus. Functionally, transcription factor that acts as a repressor of reproductive development, meristem size and plant growth. Regulates meristem size, cell size and cell number during plant development. Binds to the promoters of the cell cycle regulators CYCB1-2 and SMR4, and genes involved in cell wall organization, such as XTH9, EXPA1 and EXPA3. Possesses transactivation activity in yeast. Possesses transactivation activity in plant protoplasts. Plays a role in abiotic stress response by binding to the 5'-CAGCTG-3' DNA sequence found in the promoters of MYB44 and TRX8. Plays a role in osmosensory response by binding to the 5'-AGCTGT/G-3' DNA sequence found in the promoters of the hypoosmolarity-responsive genes CYP707A1 and CYP707A3. Binds to the 5'-AGCTGT-3' DNA sequence found in the promoter of the ZAT1 gene in response to abiotic stresses, such as oxidative stress, high-light, osmotic shock, salt and heat stresses. This Arabidopsis thaliana (Mouse-ear cress) protein is bZIP transcription factor 29.